A 97-amino-acid chain; its full sequence is Secreted transmembrane peptide 4 (97 aa).

The signal sequence occupies residues 1–33; the sequence is MTKNMTKKKMGLMSPNIAAFVLPMLLVLFTISS. Positions 54–67 match the SCOOP motif motif; that stretch reads IVFTPPSSSCGGSP. The short motif at 60–62 is the SxS motif essential for MIK2 binding element; that stretch reads SSS. Positions 75–97 are disordered; the sequence is WMPRRPCRRTRPPGTNIPVSQSP.

Belongs to the serine rich endogenous peptide (SCOOP) phytocytokine family. In terms of assembly, interacts with MIK2 (via extracellular leucine-rich repeat domain); this interaction triggers the formation of complex between MIK2 and the BAK1/SERK3 and SERK4 coreceptors, and subsequent BAK1 activation by phosphorylation. In terms of tissue distribution, mostly expressed in leaves and stems, and, to a lower extent, in roots, siliques, seeds and flowers.

The protein resides in the cell membrane. The protein localises to the secreted. Its subcellular location is the extracellular space. It localises to the apoplast. In terms of biological role, brassicaceae-specific phytocytokine (plant endogenous peptide released into the apoplast) perceived by MIK2 in a BAK1/SERK3 and SERK4 coreceptors-dependent manner, that modulates various physiological and antimicrobial processes including growth prevention and reactive oxygen species (ROS) response regulation. Prevents general growth and development. This Arabidopsis thaliana (Mouse-ear cress) protein is Secreted transmembrane peptide 4.